Consider the following 266-residue polypeptide: Methylsterol monooxygenase 2-2 (266 aa).

3 consecutive transmembrane segments (helical) span residues Ile24–Leu44, Arg71–Phe91, and Glu107–His127. The Fatty acid hydroxylase domain maps to Leu113 to Thr247. Residues His127–His131 carry the Histidine box-1 motif. A Histidine box-2 motif is present at residues His140 to His144. The helical transmembrane segment at Ile162 to Thr182 threads the bilayer. The Histidine box-3 motif lies at Phe219–Arg225.

The protein belongs to the sterol desaturase family. Fe cation is required as a cofactor. Expressed in shoots, roots, siliques and flowers, and, slightly, in developing seeds.

It localises to the endoplasmic reticulum membrane. The catalysed reaction is 4,4-dimethyl-5alpha-cholest-7-en-3beta-ol + 6 Fe(II)-[cytochrome b5] + 3 O2 + 5 H(+) = 4alpha-carboxy-4beta-methyl-5alpha-cholest-7-ene-3beta-ol + 6 Fe(III)-[cytochrome b5] + 4 H2O. The enzyme catalyses 24-methylidenelophenol + 6 Fe(II)-[cytochrome b5] + 3 O2 + 5 H(+) = 4alpha-carboxy-ergosta-7,24(24(1))-dien-3beta-ol + 6 Fe(III)-[cytochrome b5] + 4 H2O. Functionally, non-heme iron oxygenase involved in sterols biosynthesis by catalyzing the removal of the second methyl group at the C-4 position. 24-ethylidenelophenol and 24-ethyllophenol are the preferred substrates. Together with SMO2-1, required during embryogenesis, probably by maintaining sterols and auxin homeostasis. This Arabidopsis thaliana (Mouse-ear cress) protein is Methylsterol monooxygenase 2-2.